A 229-amino-acid chain; its full sequence is Potassium/proton antiporter CemA (229 aa).

The next 3 membrane-spanning stretches (helical) occupy residues 6 to 26 (AFIP…ISLC), 107 to 127 (ILHF…SFWG), and 189 to 209 (ILSG…KYWI).

It belongs to the CemA family.

The protein resides in the plastid. The protein localises to the chloroplast inner membrane. The catalysed reaction is K(+)(in) + H(+)(out) = K(+)(out) + H(+)(in). Functionally, contributes to K(+)/H(+) antiport activity by supporting proton efflux to control proton extrusion and homeostasis in chloroplasts in a light-dependent manner to modulate photosynthesis. Prevents excessive induction of non-photochemical quenching (NPQ) under continuous-light conditions. Indirectly promotes efficient inorganic carbon uptake into chloroplasts. This Lepidium virginicum (Virginia pepperweed) protein is Potassium/proton antiporter CemA.